We begin with the raw amino-acid sequence, 417 residues long: MNTDIANQLRVAKKATTDLNLIQSDTRTIILKTLAANLEKHIENIIQENQKDLSLMLEQDPRYDRLLLNKERILSLANDVRKVASLPNPLGVNLLEKSMPNGLSIKKITVPLGVIAVIYESRPNVTIDIFSLCFKSGNVCILKGGKEAHFTNSYLLLLIKNTLKNFNINTDIVCLLPPERALITPLLNATGLVDLCIPRGSQNLINFVRDNAKIPVIETGAGIVHTYFDKSGDLEKGKKIINNAKTRRVSVCNALDTLIIHADRLKDLPELVETLSQKNVIIYADQDAYQVLDKNYPEQLLMKAKPQDFGHEFLDYKLAIKTVPNIKAAIDHIQQFSSYHSEAVIAEDESAIDKFLTEVDAAAVYANASTAFTDGGEFGLGAEIGISTQKVHARGPMGLEALTSYKWVIRGTGQIRD.

This sequence belongs to the gamma-glutamyl phosphate reductase family.

It localises to the cytoplasm. The enzyme catalyses L-glutamate 5-semialdehyde + phosphate + NADP(+) = L-glutamyl 5-phosphate + NADPH + H(+). It participates in amino-acid biosynthesis; L-proline biosynthesis; L-glutamate 5-semialdehyde from L-glutamate: step 2/2. Its function is as follows. Catalyzes the NADPH-dependent reduction of L-glutamate 5-phosphate into L-glutamate 5-semialdehyde and phosphate. The product spontaneously undergoes cyclization to form 1-pyrroline-5-carboxylate. The protein is Gamma-glutamyl phosphate reductase of Legionella pneumophila (strain Paris).